The following is a 539-amino-acid chain: Protein ENTREP2 (539 aa).

The next 4 membrane-spanning stretches (helical) occupy residues 31 to 51 (IVLA…AVSF), 65 to 85 (SCPF…VVSW), 89 to 109 (LSLV…LNLA), and 176 to 196 (LLFS…LATA). A disordered region spans residues 301–481 (VVGQPPASQV…TSKERPRSLV (181 aa)). Over residues 306 to 331 (PASQVTSIGQQVAESSSGDPNTSAGF) the composition is skewed to polar residues. Low complexity predominate over residues 347 to 365 (GTATPGSSPSPDGPVGAPA). Positions 395 to 408 (SRSTSDPTLCTSSM) are enriched in polar residues.

The protein belongs to the ENTREP family.

It is found in the membrane. This Homo sapiens (Human) protein is Protein ENTREP2.